Consider the following 144-residue polypeptide: uncharacterized protein (144 aa).

4 helical membrane passes run 27 to 47, 49 to 69, 83 to 103, and 106 to 126; these read VVCA…IPDI, LLPI…LLAL, IVLL…DATV, and ALDM…ILNV.

The protein resides in the membrane. This is an uncharacterized protein from Saccharomyces cerevisiae (strain ATCC 204508 / S288c) (Baker's yeast).